Consider the following 780-residue polypeptide: LPS-assembly protein LptD (780 aa).

A signal peptide spans 1–24; that stretch reads MKKRLPTLLASLIGSALYSQQALA.

The protein belongs to the LptD family. Component of the lipopolysaccharide transport and assembly complex. Interacts with LptE and LptA.

The protein localises to the cell outer membrane. Together with LptE, is involved in the assembly of lipopolysaccharide (LPS) at the surface of the outer membrane. This is LPS-assembly protein LptD from Sodalis glossinidius (strain morsitans).